The chain runs to 112 residues: FK506-binding protein 1 (112 aa).

The span at 1–10 shows a compositional bias: polar residues; that stretch reads MSAPATTQVE. Positions 1 to 20 are disordered; sequence MSAPATTQVEILQEGDGKTF. The 89-residue stretch at 24–112 folds into the PPIase FKBP-type domain; sequence GDLVTIHYTG…LFDVELLNVN (89 aa).

Belongs to the FKBP-type PPIase family. FKBP1 subfamily.

The protein resides in the cytoplasm. It carries out the reaction [protein]-peptidylproline (omega=180) = [protein]-peptidylproline (omega=0). Its activity is regulated as follows. Inhibited by both FK506 and rapamycin. PPIases accelerate the folding of proteins. It catalyzes the cis-trans isomerization of proline imidic peptide bonds in oligopeptides. The chain is FK506-binding protein 1 (FPR1) from Debaryomyces hansenii (strain ATCC 36239 / CBS 767 / BCRC 21394 / JCM 1990 / NBRC 0083 / IGC 2968) (Yeast).